The following is a 618-amino-acid chain: MSSKSASKLKREAKKAERLAAKGESVKPSKKNGTKNGKDKEVDGVTKDLSELSTSDPIFERSASGVLTSQPMSRDIKIDSYTLSFHGRLLIENATIELNHGQRYGLLGDNGSGKSTFLESVAARDVEYPEHIDSYLLNAEAEPSDVNAVDYIIQSAKDKVQKLEAEIEELSTADDVDDVLLESKYEELDDMDPSTFEAKAAMILHGLGFTQEMMAKPTKDMSGGWRMRVALSRALFIKPSLLLLDEPTNHLDLEAVVWLENYLAKYDKILVVTSHSQDFLNNVCTNIIDLTSKKQLVYYGGNFDIYMRTKEENETNQMKAYLKQQEEIAHIKKFIASAGTYANLVRQAKSKQKIIDKMEAAGLVEKPEPPRQFSFEFDEVRKLPPPIIAFNDVAFSYDGNLDHALYRDLSFGIDMDSRVAIVGKNGTGKSTLLNLITGLLIPIEGNVSRYSGLKMAKYSQHSADQLPYDKSPLEYIMDTYKPKFPERELQQWRSVLGKFGLSGLHQTSEIRTLSDGLKSRVVFAALALEQPHILLLDEPTNHLDITSIDALAKAINVWTGGVVLVSHDFRLIGQVSKELWEVKDKKVVKLDCSIEEYKKSMAKEVQSRDTTAKVKHLI.

Residues 1–45 form a disordered region; it reads MSSKSASKLKREAKKAERLAAKGESVKPSKKNGTKNGKDKEVDGV. Basic and acidic residues-rich tracts occupy residues 14–27 and 36–45; these read KKAE…ESVK and NGKDKEVDGV. Ser-50 and Ser-53 each carry phosphoserine. Thr-54 carries the post-translational modification Phosphothreonine. Residues Ser-55 and Ser-64 each carry the phosphoserine modification. ABC transporter domains lie at 76 to 325 and 388 to 609; these read IKID…LKQQ and IAFN…QSRD. ATP-binding positions include 108–115 and 423–430; these read GDNGSGKS and GKNGTGKS.

The protein belongs to the ABC transporter superfamily.

The protein localises to the cytoplasm. This is an uncharacterized protein from Schizosaccharomyces pombe (strain 972 / ATCC 24843) (Fission yeast).